We begin with the raw amino-acid sequence, 397 residues long: UPF0597 protein Tmel_1007 (397 aa).

Belongs to the UPF0597 family.

This is UPF0597 protein Tmel_1007 from Thermosipho melanesiensis (strain DSM 12029 / CIP 104789 / BI429).